Here is a 200-residue protein sequence, read N- to C-terminus: Protein DMP7 (200 aa).

Transmembrane regions (helical) follow at residues 37-57 (LSNLLPTGSVMSFQIMCPVLT), 69-89 (WLTCFLVSLCAISCFLFSFTD), 129-149 (ILDFIHAIMSMLVFFAVSMFD), and 167-187 (ILTSLPFVIGVICGAFFLAFP).

This sequence belongs to the plant DMP1 protein family. Expressed in leaves, stems, flowers, siliques and roots, especially in the vasculature.

It localises to the endoplasmic reticulum membrane. Its function is as follows. Involved in membrane remodeling. The protein is Protein DMP7 of Arabidopsis thaliana (Mouse-ear cress).